The primary structure comprises 291 residues: Acetyl-coenzyme A carboxylase carboxyl transferase subunit beta (291 aa).

One can recognise a CoA carboxyltransferase N-terminal domain in the interval 34-291 (MWTKCSNCNS…LILHGVNKYE (258 aa)). The Zn(2+) site is built by cysteine 38, cysteine 41, cysteine 57, and cysteine 60. The C4-type zinc finger occupies 38–60 (CSNCNSMIYYEDLENNKYVCTKC).

Belongs to the AccD/PCCB family. Acetyl-CoA carboxylase is a heterohexamer composed of biotin carboxyl carrier protein (AccB), biotin carboxylase (AccC) and two subunits each of ACCase subunit alpha (AccA) and ACCase subunit beta (AccD). Zn(2+) is required as a cofactor.

The protein resides in the cytoplasm. The catalysed reaction is N(6)-carboxybiotinyl-L-lysyl-[protein] + acetyl-CoA = N(6)-biotinyl-L-lysyl-[protein] + malonyl-CoA. It functions in the pathway lipid metabolism; malonyl-CoA biosynthesis; malonyl-CoA from acetyl-CoA: step 1/1. In terms of biological role, component of the acetyl coenzyme A carboxylase (ACC) complex. Biotin carboxylase (BC) catalyzes the carboxylation of biotin on its carrier protein (BCCP) and then the CO(2) group is transferred by the transcarboxylase to acetyl-CoA to form malonyl-CoA. This is Acetyl-coenzyme A carboxylase carboxyl transferase subunit beta from Clostridium botulinum (strain Alaska E43 / Type E3).